The chain runs to 314 residues: Malate dehydrogenase (314 aa).

Residues 13–18 (GGGQIG) and D37 contribute to the NAD(+) site. Substrate is bound by residues R88 and R94. NAD(+)-binding positions include N101 and 124–126 (VAN). N126 and R157 together coordinate substrate. The active-site Proton acceptor is the H181.

Belongs to the LDH/MDH superfamily. MDH type 3 family.

The catalysed reaction is (S)-malate + NAD(+) = oxaloacetate + NADH + H(+). Catalyzes the reversible oxidation of malate to oxaloacetate. This Myxococcus xanthus protein is Malate dehydrogenase.